Here is a 2194-residue protein sequence, read N- to C-terminus: PDZ and LIM domain protein Zasp (2194 aa).

The 83-residue stretch at 8–90 (QIKLSRFDAQ…NFVITVQRGG (83 aa)) folds into the PDZ domain. The tract at residues 211-277 (TGQSTPAFGN…KPPSTGGLPT (67 aa)) is disordered. Low complexity predominate over residues 228–253 (PQQLQQPQQQYNQHQQHYHQQQQQQQ). Positions 280–339 (NICTECERLITGVFVRIKDKNLHVECFKCATCGTSLKNQGYYNFNNKLYCDIHAKQAAIN) constitute an LIM zinc-binding 1 domain. Over residues 415–435 (AATPQAATATDSPAATASSSD) the composition is skewed to low complexity. 11 disordered regions span residues 415–436 (AATPQAATATDSPAATASSSDN), 457–476 (VALAPPPPQPPTAGGGDQPF), 511–558 (GAAA…AVEE), 580–611 (SRQSQRGSSFTWPPPQDDSHLAPTAAPLYIPP), 623–692 (VQQV…TTSE), 896–940 (AAAA…PRGS), 1223–1260 (LTQKSQQQPPQANQQQQQQQQQRGTQQQQHSQVTQRTQ), 1297–1322 (QSQSSASYSSKATACSNSSSTVPPAN), 1550–1632 (LNAS…QQPE), 1646–1738 (QREQ…YGKT), and 1815–1837 (APPPGFLQQQQQQQQRSAFSGYQ). Positions 515–530 (PKSPVSYPPQQQQQSP) are enriched in low complexity. 2 stretches are compositionally biased toward polar residues: residues 580 to 590 (SRQSQRGSSFT) and 644 to 667 (VGTSANGAPQWQSYSAPQLTTASA). Over residues 676 to 692 (SSDSYTSTSTTTTTTSE) the composition is skewed to low complexity. Residues 1598-1610 (QTGSITTGQSYQG) are compositionally biased toward polar residues. Composition is skewed to low complexity over residues 1616–1630 (SEQSSQSASQSYNQQ), 1646–1668 (QREQSSQLQQQAQSQTQSQTRSQ), and 1699–1727 (SQSVSQSKAQSQSISQAQTQAQSQSQNQS). LIM zinc-binding domains follow at residues 2018–2078 (PLCN…KYLA), 2079–2138 (PTCS…LFTT), and 2139–2194 (KCFA…NHAR).

As to quaternary structure, interacts with alpha-actinin (Actn). As to expression, expression is first detected in the proctodeum and the midgut primordium. In stage 11 embryos, expression is predominant in the leading edge of epidermal cells adjacent to the amnioserosa. Stage 12 embryos exhibit expression in the midgut and the leading edge. Expressed in several rows of germ band cells next to the leading edge at stage 14. Strong expression is visible in the midgut and pharyngeal muscles of stage 17 embryos. Also expressed in somatic muscles and visceral mesoderm. Colocalizes with mys (beta PS integrin) in myotendinous junctions and with Actn in muscle Z lines.

Its subcellular location is the cytoplasm. The protein localises to the cytoskeleton. Regulator of cell matrix adhesion having two related functions, one upstream of Actn organizing the Z line and the other downstream of integrins regulating assembly of integrin adhesion sites. Also required for the formation of myotendinous junctions in muscles. In Drosophila melanogaster (Fruit fly), this protein is PDZ and LIM domain protein Zasp (Zasp52).